Consider the following 506-residue polypeptide: MWRLPPKSNANAKVLSRWLLFVGLGIAGWGTQLALPPVSGWFLAFVGIVPLWWQCQVLAPLWAAIAGLCWGWGFYGSSLVWVWDLHPLTWIGIDPVPSWLISRGIWLCLSSWGAVLSGSWALLMARYGVRRSAPWQLLWGVTLWCALEALWSHSPLWWISLSLTQSPGGLVQLGRLAGPTTITAVVMTVNGLVTLSLRQQKWARVGLAMTLVAAIALNGVLSVRVMADRGEPLRVGLIQGNIPTREKLTPEGIRRAWQVYLQGYHQLVSWGVDAVLTPEGALPILWQPQQMNPITEAVREAGVPLWLGTFMETAGGSHQVLLSLDGNGEIDSHYGKVNLVPLGEYIPPWLGGVVQRLSTLRSPLIPGDPEQVFTTPWGNAVVLICFESAFSHRSRWQLVHGGQFILSVANDDPYHRQLMTQHHGHDVLRAVEGDRWLVRCTNTGLSAVIAPTGETLWLSKADEFVIYAATIFRRQTETLYTRYGDWLLPLLLGMLSLSVLRQRGWH.

7 consecutive transmembrane segments (helical) span residues 10 to 30 (ANAK…AGWG), 33 to 53 (LALP…PLWW), 57 to 77 (VLAP…FYGS), 105 to 125 (IWLC…LLMA), 139 to 159 (WGVT…LWWI), 176 to 196 (LAGP…VTLS), and 205 to 225 (VGLA…SVRV). The region spanning 238-473 (IQGNIPTREK…FVIYAATIFR (236 aa)) is the CN hydrolase domain. Glu279 (proton acceptor) is an active-site residue. Residue Lys336 is part of the active site. The Nucleophile role is filled by Cys385. The helical transmembrane segment at 483–500 (YGDWLLPLLLGMLSLSVL) threads the bilayer.

Belongs to the CN hydrolase family. Apolipoprotein N-acyltransferase subfamily.

The protein resides in the cell inner membrane. The enzyme catalyses N-terminal S-1,2-diacyl-sn-glyceryl-L-cysteinyl-[lipoprotein] + a glycerophospholipid = N-acyl-S-1,2-diacyl-sn-glyceryl-L-cysteinyl-[lipoprotein] + a 2-acyl-sn-glycero-3-phospholipid + H(+). It functions in the pathway protein modification; lipoprotein biosynthesis (N-acyl transfer). Functionally, catalyzes the phospholipid dependent N-acylation of the N-terminal cysteine of apolipoprotein, the last step in lipoprotein maturation. The sequence is that of Apolipoprotein N-acyltransferase from Thermosynechococcus vestitus (strain NIES-2133 / IAM M-273 / BP-1).